The sequence spans 312 residues: Ubiquinone biosynthesis protein COQ9, mitochondrial (312 aa).

The N-terminal 45 residues, 1-45 (MAATAAVSGVLRRLGWRLLQLRCLPVARCQSPLMPRAFHTAVGFR), are a transit peptide targeting the mitochondrion. An SIFI-degron motif is present at residues 17 to 32 (RLLQLRCLPVARCQSP). Residues 43-92 (GFRSSEEQRQQPPHSSQQHSETQGPEFSRPPPRYTDQSGEEEEDYESEEQ) form a disordered region. The segment covering 52-63 (QQPPHSSQQHSE) has biased composition (low complexity). S80 carries the post-translational modification Phosphoserine. Residues 80-91 (SGEEEEDYESEE) are compositionally biased toward acidic residues. K169 carries the post-translational modification N6-acetyllysine. R238 provides a ligand contact to a 1,2-diacylglycero-3-phosphoethanolamine.

The protein belongs to the COQ9 family. As to quaternary structure, homodimer. Heterodimer; two heterodimers of COQ7:COQ9 come together on the same side of the lipid pseudo-bilayer and form a curved tetramer with a hydrophobic surface suitable for membrane interaction. These two tetramers assemble into a soluble octamer with a pseudo-bilayer of lipids captured within. Interacts with COQ7; this interaction allows ubiquinone (CoQ) isoprene intermediates presentation to COQ7 and facilitates the COQ7-mediated hydroxylase step. In response to mitochondrial stress, the precursor protein is ubiquitinated by the SIFI complex in the cytoplasm before mitochondrial import, leading to its degradation. Within the SIFI complex, UBR4 initiates ubiquitin chain that are further elongated or branched by KCMF1.

It is found in the mitochondrion. It functions in the pathway cofactor biosynthesis; ubiquinone biosynthesis. Functionally, membrane-associated protein that warps the membrane surface to access and bind aromatic isoprenes with high specificity, including ubiquinone (CoQ) isoprene intermediates and presents them directly to COQ7, therefore facilitating the COQ7-mediated hydroxylase step. Participates in the biosynthesis of coenzyme Q, also named ubiquinone, an essential lipid-soluble electron transporter for aerobic cellular respiration. The sequence is that of Ubiquinone biosynthesis protein COQ9, mitochondrial from Rattus norvegicus (Rat).